We begin with the raw amino-acid sequence, 572 residues long: Potassium-transporting ATPase potassium-binding subunit (572 aa).

11 consecutive transmembrane segments (helical) span residues 5 to 25 (LAAGLQIGFVILALAIAYVPL), 71 to 91 (VGYTLSLLGFSFASVIFLYVL), 97 to 117 (VLPLSGGLGAVSPAVAFNTAV), 142 to 162 (GLAVQNFVSAAVGLTVAVALI), 188 to 208 (ILLPLSFAVALILLSQGTIQS), 258 to 278 (PTPLSNVIEILAILIIPVCLT), 292 to 312 (LTVLSVMGTLFGGMLALVTWA), 387 to 407 (GLYGILVLAIIAVFVGGLLVG), 422 to 442 (ITMAALSVLVMPALVLVGTGI), 500 to 520 (LGMAMLLGRFLPIIFTLALAG), and 548 to 568 (GTVLLVAALTFFPALALGPIA).

The protein belongs to the KdpA family. The system is composed of three essential subunits: KdpA, KdpB and KdpC.

The protein localises to the cell membrane. In terms of biological role, part of the high-affinity ATP-driven potassium transport (or Kdp) system, which catalyzes the hydrolysis of ATP coupled with the electrogenic transport of potassium into the cytoplasm. This subunit binds the extracellular potassium ions and delivers the ions to the membrane domain of KdpB through an intramembrane tunnel. This Mycobacteroides abscessus (strain ATCC 19977 / DSM 44196 / CCUG 20993 / CIP 104536 / JCM 13569 / NCTC 13031 / TMC 1543 / L948) (Mycobacterium abscessus) protein is Potassium-transporting ATPase potassium-binding subunit.